We begin with the raw amino-acid sequence, 310 residues long: Probable endonuclease 4 (310 aa).

The segment at 1–31 (MNNQQSRGALGTSGATPDLPDATPGLSRNPV) is disordered. Residues H94, H134, E173, D207, H210, H244, D257, H259, and E289 each contribute to the Zn(2+) site.

The protein belongs to the AP endonuclease 2 family. Zn(2+) is required as a cofactor.

It catalyses the reaction Endonucleolytic cleavage to 5'-phosphooligonucleotide end-products.. In terms of biological role, endonuclease IV plays a role in DNA repair. It cleaves phosphodiester bonds at apurinic or apyrimidinic (AP) sites, generating a 3'-hydroxyl group and a 5'-terminal sugar phosphate. The sequence is that of Probable endonuclease 4 from Streptomyces avermitilis (strain ATCC 31267 / DSM 46492 / JCM 5070 / NBRC 14893 / NCIMB 12804 / NRRL 8165 / MA-4680).